Consider the following 346-residue polypeptide: Melatonin receptor type 1C (346 aa).

At 1–26 the chain is on the extracellular side; the sequence is MERPGSNGSCSGCRLEGGPAARAASG. N7 carries N-linked (GlcNAc...) asparagine glycosylation. Residues 27–47 form a helical membrane-spanning segment; it reads LAAVLIVTIVVDVLGNALVIL. Over 48-60 the chain is Cytoplasmic; the sequence is SVLRNKKLRNAGN. A helical transmembrane segment spans residues 61–81; that stretch reads IFVVSLSVADLVVAVYPYPLI. Residues 82 to 99 lie on the Extracellular side of the membrane; that stretch reads LSAIFHNGWTMGNIHCQI. C97 and C174 are disulfide-bonded. The helical transmembrane segment at 100–120 threads the bilayer; it reads SGFLMGLSVIGSIFNITAIAI. Residues 121-139 are Cytoplasmic-facing; it reads NRYCYICHSLRYDKLFNLK. Residues 140–160 form a helical membrane-spanning segment; it reads NTCCYICLTWTLTVVAIVPNF. Over 161–184 the chain is Extracellular; the sequence is FVGSLQYDPRIYSCTFAQTVSTSY. Residues 185 to 205 form a helical membrane-spanning segment; the sequence is TITVVVVHFIVPLSIVTFCYL. Residues 206 to 237 lie on the Cytoplasmic side of the membrane; it reads RIWILVIQVKHRVRQDCKQKIRAADIRNFLTM. The chain crosses the membrane as a helical span at residues 238-258; that stretch reads FVVFVLFAVCWGPLNFIGLAV. Residues 259-271 are Extracellular-facing; sequence SINPSKVQPHIPE. A helical membrane pass occupies residues 272–292; sequence WLFVLSYFMAYFNSCLNAVIY. Over 293–346 the chain is Cytoplasmic; that stretch reads GLLNQNFRKEYKRILLMLRTPRLLFIDVSKGGTEGLKSKPSPAVTNNNQAEIHL. The interval 326-346 is disordered; that stretch reads EGLKSKPSPAVTNNNQAEIHL. Over residues 335–346 the composition is skewed to polar residues; it reads AVTNNNQAEIHL.

It belongs to the G-protein coupled receptor 1 family. Expressed in optic tectum, neostriatum, hypothalamus, thalamus and pineal gland, less in cerebellum and retina.

Its subcellular location is the cell membrane. In terms of biological role, high affinity receptor for melatonin. The activity of this receptor is mediated by pertussis toxin sensitive G proteins that inhibits adenylate cyclase activity. This is Melatonin receptor type 1C from Gallus gallus (Chicken).